We begin with the raw amino-acid sequence, 154 residues long: Transcriptional repressor NrdR (154 aa).

The disordered stretch occupies residues 1–22 (MECPNCHKNASRVIDSRPSDEN). A zinc finger lies at 3-34 (CPNCHKNASRVIDSRPSDENRAIRRRRECENC). Residues 49–139 (LLVVKNDGTR…IYRQFKDVSG (91 aa)) enclose the ATP-cone domain.

Belongs to the NrdR family. Zn(2+) serves as cofactor.

Negatively regulates transcription of bacterial ribonucleotide reductase nrd genes and operons by binding to NrdR-boxes. This chain is Transcriptional repressor NrdR, found in Lactobacillus johnsonii (strain CNCM I-12250 / La1 / NCC 533).